We begin with the raw amino-acid sequence, 350 residues long: Small ribosomal subunit biogenesis GTPase RsgA (350 aa).

Polar residues predominate over residues 1-17; that stretch reads MSKNKLSKGQQRRVQAN. The disordered stretch occupies residues 1–35; that stretch reads MSKNKLSKGQQRRVQANHQRRLRTDRKPELDDSQL. A CP-type G domain is found at 103–273; sequence TSVLTRPDLY…VIDSPGVREF (171 aa). GTP is bound by residues 159–162 and 213–221; these read NKID and GQSGVGKSS. Cys-297, Cys-302, His-304, and Cys-310 together coordinate Zn(2+).

It belongs to the TRAFAC class YlqF/YawG GTPase family. RsgA subfamily. Monomer. Associates with 30S ribosomal subunit, binds 16S rRNA. It depends on Zn(2+) as a cofactor.

The protein localises to the cytoplasm. Functionally, one of several proteins that assist in the late maturation steps of the functional core of the 30S ribosomal subunit. Helps release RbfA from mature subunits. May play a role in the assembly of ribosomal proteins into the subunit. Circularly permuted GTPase that catalyzes slow GTP hydrolysis, GTPase activity is stimulated by the 30S ribosomal subunit. The polypeptide is Small ribosomal subunit biogenesis GTPase RsgA (Yersinia pseudotuberculosis serotype O:1b (strain IP 31758)).